The sequence spans 673 residues: Protein VirD3 (673 aa).

Disordered stretches follow at residues 36–73 (VAGE…GRLG), 171–216 (SPVN…GTSV), 229–409 (ERDT…LRSS), 478–497 (RLNG…LEDF), 520–552 (EKGK…VTPL), and 585–673 (DSSR…GCGR). Polar residues-rich tracts occupy residues 171–183 (SPVN…SNWQ), 193–216 (VQPS…GTSV), 234–246 (SETT…TISS), and 268–277 (QSLSVTVTTP). Residues 278-287 (NSNAEASSHS) show a composition bias toward low complexity. A compositionally biased stretch (basic and acidic residues) spans 288–303 (AHTETLDDVSSDRSSE). 2 stretches are compositionally biased toward basic and acidic residues: residues 520–534 (EKGK…DTRF) and 638–673 (AAEH…GCGR).

The chain is Protein VirD3 (virD3) from Agrobacterium fabrum (strain C58 / ATCC 33970) (Agrobacterium tumefaciens (strain C58)).